The primary structure comprises 142 residues: Large ribosomal subunit protein uL13 (142 aa).

Belongs to the universal ribosomal protein uL13 family. As to quaternary structure, part of the 50S ribosomal subunit.

This protein is one of the early assembly proteins of the 50S ribosomal subunit, although it is not seen to bind rRNA by itself. It is important during the early stages of 50S assembly. The protein is Large ribosomal subunit protein uL13 of Stutzerimonas stutzeri (strain A1501) (Pseudomonas stutzeri).